A 452-amino-acid chain; its full sequence is Inner membrane metabolite transport protein YdjE (452 aa).

Topologically, residues 1 to 20 (MEQYDQIGARLDRLPLARFH) are cytoplasmic. A helical membrane pass occupies residues 21-43 (YRIFGIISFSLLLTGFLSYSGNV). Topologically, residues 44–57 (VLAKLVSNGWSNNF) are periplasmic. A helical transmembrane segment spans residues 58–80 (LNAAFTSALMFGYFIGSLTGGFI). Residues 81–91 (GDYFGRRRAFR) are Cytoplasmic-facing. The helical transmembrane segment at 92–114 (INLLIVGIAATGAAFVPDMYWLI) threads the bilayer. Residues 115–117 (FFR) lie on the Periplasmic side of the membrane. The chain crosses the membrane as a helical span at residues 118-140 (FLMGTGMGALIMVGYASFTEFIP). Residues 141–152 (ATVRGKWSARLS) lie on the Cytoplasmic side of the membrane. The chain crosses the membrane as a helical span at residues 153 to 175 (FVGNWSPMLSAAIGVVVIAFFSW). The Periplasmic portion of the chain corresponds to 176-178 (RIM). Residues 179 to 198 (FLLGGIGILLAWFLSGKYFI) traverse the membrane as a helical segment. The Cytoplasmic portion of the chain corresponds to 199-265 (ESPRWLAGKG…KGEMLRRTLV (67 aa)). Residues 266–288 (AITVLIAMNISLYTITVWIPTIF) form a helical membrane-spanning segment. The Periplasmic portion of the chain corresponds to 289–297 (VNSGIDVDK). The chain crosses the membrane as a helical span at residues 298 to 320 (SILMTAVIMIGAPVGIFIAALII). Over 321 to 326 (DHFPRR) the chain is Cytoplasmic. A helical transmembrane segment spans residues 327 to 344 (LFGSTLLIIIAVLGYIYS). At 345–353 (IQTTEWAIL) the chain is on the periplasmic side. The helical transmembrane segment at 354–376 (IYGLVMIFFLYMYVCFASAVYIP) threads the bilayer. Topologically, residues 377-388 (ELWPTHLRLRGS) are cytoplasmic. The chain crosses the membrane as a helical span at residues 389–411 (GFVNAVGRIVAVFTPYGVAALLT). Over 412–415 (HYGS) the chain is Periplasmic. Residues 416–438 (ITVFMVLGVMLLLCALVLSIFGI) form a helical membrane-spanning segment. Topologically, residues 439-452 (ETRKVSLEEISEVN) are cytoplasmic.

It belongs to the major facilitator superfamily. Sugar transporter (TC 2.A.1.1) family.

Its subcellular location is the cell inner membrane. In Escherichia coli (strain K12), this protein is Inner membrane metabolite transport protein YdjE (ydjE).